We begin with the raw amino-acid sequence, 243 residues long: Protein GID8 homolog (243 aa).

One can recognise a LisH domain in the interval 40-72 (RKEDMNTLVMNFLVTEGYVEAAEKFQRESGTKP). The region spanning 78-135 (TITDRMAVKKAVQNGNVEDAIEKVNDLNPEILDTNPELFFHLQQQRLIELIRQGKTEE) is the CTLH domain.

The protein belongs to the GID8 family. Interacts with RANBPM.

It is found in the cytoplasm. In Arabidopsis thaliana (Mouse-ear cress), this protein is Protein GID8 homolog.